The following is a 467-amino-acid chain: Cysteine--tRNA ligase (467 aa).

Position 29 (C29) interacts with Zn(2+). The 'HIGH' region motif lies at 31-41; it reads PTVYNYVHIGN. Positions 209, 234, and 238 each coordinate Zn(2+). Residues 267–271 carry the 'KMSKS' region motif; that stretch reads KMSKS. An ATP-binding site is contributed by K270.

Belongs to the class-I aminoacyl-tRNA synthetase family. In terms of assembly, monomer. Requires Zn(2+) as cofactor.

Its subcellular location is the cytoplasm. The catalysed reaction is tRNA(Cys) + L-cysteine + ATP = L-cysteinyl-tRNA(Cys) + AMP + diphosphate. In Xylella fastidiosa (strain Temecula1 / ATCC 700964), this protein is Cysteine--tRNA ligase.